Reading from the N-terminus, the 560-residue chain is Putative transport protein VP1232 (560 aa).

A run of 5 helical transmembrane segments spans residues 8–28, 37–57, 66–86, 91–111, and 164–184; these read LLDQ…LAIG, LGNS…GFSF, FMLF…GIFF, HYFI…YGLS, and VGYA…AKLL. 2 consecutive RCK C-terminal domains span residues 205–292 and 293–376; these read LGNS…FRNG and KEVF…KIGF. Transmembrane regions (helical) follow at residues 386 to 406, 409 to 429, 443 to 463, 478 to 498, 506 to 526, and 539 to 559; these read LLAF…TMTF, VSFS…LGFL, ALNM…GLSA, VIGL…LVGA, ALLF…DVVN, and AGTY…LIIL.

This sequence belongs to the AAE transporter (TC 2.A.81) family. YbjL subfamily.

Its subcellular location is the cell membrane. This chain is Putative transport protein VP1232, found in Vibrio parahaemolyticus serotype O3:K6 (strain RIMD 2210633).